The sequence spans 352 residues: Photosystem II D2 protein (352 aa).

The Cytoplasmic segment spans residues 1 to 31 (MTIAVGRAPVERGWFDVLDDWLKRDRFVFIG). The helical transmembrane segment at 32–53 (WSGLLLFPCAFMALGGWLTGTT) threads the bilayer. Residues 54–108 (FVTSWYTHGLASSYLEGANFLTVAVSSPADAFGHSLLFLWGPEAQGNLTRWFQIG) lie on the Lumenal, thylakoid side of the membrane. A helical transmembrane segment spans residues 109-131 (GLWPFVALHGAFGLIGFMLRQFE). Residue His117 coordinates chlorophyll a. Gln129 is a binding site for pheophytin a. The Cytoplasmic segment spans residues 132-140 (ISRLVGIRP). A helical transmembrane segment spans residues 141-162 (YNAIAFSGPIAVFVSVFLMYPL). A pheophytin a-binding site is contributed by Asn142. Residues 163-190 (GQSSWFFAPSFGVAGIFRFILFLQGFHN) lie on the Lumenal, thylakoid side of the membrane. The chain crosses the membrane as a helical span at residues 191–217 (WTLNPFHMMGVAGILGGALLCAIHGAT). A chlorophyll a-binding site is contributed by His197. The a plastoquinone site is built by His214 and Phe261. His214 provides a ligand contact to Fe cation. Residues 218 to 265 (VENTLFEDGEDSNTFRAFEPTQAEETYSMVTANRFWSQIFGIAFSNKR) lie on the Cytoplasmic side of the membrane. The chain crosses the membrane as a helical span at residues 266-288 (WLHFFMLFVPVTGLWMSSVGIVG). Position 268 (His268) interacts with Fe cation. Residues 289-352 (LALNLRAYDF…EEVLPRGNAL (64 aa)) are Lumenal, thylakoid-facing.

Belongs to the reaction center PufL/M/PsbA/D family. PSII is composed of 1 copy each of membrane proteins PsbA, PsbB, PsbC, PsbD, PsbE, PsbF, PsbH, PsbI, PsbJ, PsbK, PsbL, PsbM, PsbT, PsbX, PsbY, PsbZ, Psb30/Ycf12, peripheral proteins PsbO, CyanoQ (PsbQ), PsbU, PsbV and a large number of cofactors. It forms dimeric complexes. The D1/D2 heterodimer binds P680, chlorophylls that are the primary electron donor of PSII, and subsequent electron acceptors. It shares a non-heme iron and each subunit binds pheophytin, quinone, additional chlorophylls, carotenoids and lipids. There is also a Cl(-1) ion associated with D1 and D2, which is required for oxygen evolution. The PSII complex binds additional chlorophylls, carotenoids and specific lipids. serves as cofactor.

Its subcellular location is the cellular thylakoid membrane. The enzyme catalyses 2 a plastoquinone + 4 hnu + 2 H2O = 2 a plastoquinol + O2. In terms of biological role, photosystem II (PSII) is a light-driven water:plastoquinone oxidoreductase that uses light energy to abstract electrons from H(2)O, generating O(2) and a proton gradient subsequently used for ATP formation. It consists of a core antenna complex that captures photons, and an electron transfer chain that converts photonic excitation into a charge separation. The D1/D2 (PsbA/PsbD) reaction center heterodimer binds P680, the primary electron donor of PSII as well as several subsequent electron acceptors. D2 is needed for assembly of a stable PSII complex. The chain is Photosystem II D2 protein from Synechocystis sp. (strain ATCC 27184 / PCC 6803 / Kazusa).